A 316-amino-acid polypeptide reads, in one-letter code: Methionyl-tRNA formyltransferase (316 aa).

112–115 lines the (6S)-5,6,7,8-tetrahydrofolate pocket; the sequence is SLLP.

This sequence belongs to the Fmt family.

The catalysed reaction is L-methionyl-tRNA(fMet) + (6R)-10-formyltetrahydrofolate = N-formyl-L-methionyl-tRNA(fMet) + (6S)-5,6,7,8-tetrahydrofolate + H(+). Its function is as follows. Attaches a formyl group to the free amino group of methionyl-tRNA(fMet). The formyl group appears to play a dual role in the initiator identity of N-formylmethionyl-tRNA by promoting its recognition by IF2 and preventing the misappropriation of this tRNA by the elongation apparatus. This is Methionyl-tRNA formyltransferase from Actinobacillus pleuropneumoniae serotype 5b (strain L20).